Consider the following 428-residue polypeptide: Serine hydroxymethyltransferase (428 aa).

Residues leucine 117 and 121–123 (GHL) each bind (6S)-5,6,7,8-tetrahydrofolate. Position 226 is an N6-(pyridoxal phosphate)lysine (lysine 226).

The protein belongs to the SHMT family. In terms of assembly, homodimer. Pyridoxal 5'-phosphate is required as a cofactor.

The protein localises to the cytoplasm. It carries out the reaction (6R)-5,10-methylene-5,6,7,8-tetrahydrofolate + glycine + H2O = (6S)-5,6,7,8-tetrahydrofolate + L-serine. It functions in the pathway one-carbon metabolism; tetrahydrofolate interconversion. Its pathway is amino-acid biosynthesis; glycine biosynthesis; glycine from L-serine: step 1/1. Its function is as follows. Catalyzes the reversible interconversion of serine and glycine with tetrahydrofolate (THF) serving as the one-carbon carrier. This reaction serves as the major source of one-carbon groups required for the biosynthesis of purines, thymidylate, methionine, and other important biomolecules. Also exhibits THF-independent aldolase activity toward beta-hydroxyamino acids, producing glycine and aldehydes, via a retro-aldol mechanism. This chain is Serine hydroxymethyltransferase, found in Aquifex aeolicus (strain VF5).